We begin with the raw amino-acid sequence, 259 residues long: Cell division protein FtsQ (259 aa).

Over 1–15 the chain is Cytoplasmic; the sequence is MTRDQTATFGRHALR. Residues 16-36 form a helical membrane-spanning segment; it reads VAGSGLLVAGVVALGLLGWQW. Residues 37–259 are Periplasmic-facing; sequence RANVTVDRVA…VVTRTRPLDG (223 aa). The 70-residue stretch at 40 to 109 folds into the POTRA domain; it reads VTVDRVAVTG…GALTISVTER (70 aa).

The protein belongs to the FtsQ/DivIB family. FtsQ subfamily.

The protein localises to the cell inner membrane. In terms of biological role, essential cell division protein. The protein is Cell division protein FtsQ of Salinibacter ruber (strain DSM 13855 / M31).